We begin with the raw amino-acid sequence, 354 residues long: NADH-quinone oxidoreductase subunit H (354 aa).

Transmembrane regions (helical) follow at residues 12-32, 62-82, 89-109, 124-144, 162-182, 203-223, 239-259, 263-283, 291-311, and 326-346; these read LLGGFWPVVWNLIKIVALIAP, PWGLLTPIADAVKLIFKEIIL, GLFLLGPVMTIMPALAAWVVV, LLFLMAITSMEVYGVIIAGWA, VSYEIAMGFALVVVLMVSGTL, FLSWNWLPLFPIFIVYFISGL, EIVAGHMIEYSGMAFAMFFLA, NMILISALAVTMFLGGWLPPI, IPGWIWLGLKTFVVVTMFLWV, and LGWKIFIPITLIWLVVVGLWI.

This sequence belongs to the complex I subunit 1 family. As to quaternary structure, NDH-1 is composed of 14 different subunits. Subunits NuoA, H, J, K, L, M, N constitute the membrane sector of the complex.

The protein localises to the cell inner membrane. It catalyses the reaction a quinone + NADH + 5 H(+)(in) = a quinol + NAD(+) + 4 H(+)(out). NDH-1 shuttles electrons from NADH, via FMN and iron-sulfur (Fe-S) centers, to quinones in the respiratory chain. The immediate electron acceptor for the enzyme in this species is believed to be ubiquinone. Couples the redox reaction to proton translocation (for every two electrons transferred, four hydrogen ions are translocated across the cytoplasmic membrane), and thus conserves the redox energy in a proton gradient. This subunit may bind ubiquinone. This Methylibium petroleiphilum (strain ATCC BAA-1232 / LMG 22953 / PM1) protein is NADH-quinone oxidoreductase subunit H.